The following is a 74-amino-acid chain: Large ribosomal subunit protein bL31 (74 aa).

Zn(2+)-binding residues include Cys-16, Cys-18, Cys-38, and Cys-41.

This sequence belongs to the bacterial ribosomal protein bL31 family. Type A subfamily. Part of the 50S ribosomal subunit. The cofactor is Zn(2+).

Binds the 23S rRNA. The sequence is that of Large ribosomal subunit protein bL31 from Salinispora tropica (strain ATCC BAA-916 / DSM 44818 / JCM 13857 / NBRC 105044 / CNB-440).